We begin with the raw amino-acid sequence, 116 residues long: Large ribosomal subunit protein bL17 (116 aa).

The protein belongs to the bacterial ribosomal protein bL17 family. As to quaternary structure, part of the 50S ribosomal subunit. Contacts protein L32.

The polypeptide is Large ribosomal subunit protein bL17 (Dictyoglomus thermophilum (strain ATCC 35947 / DSM 3960 / H-6-12)).